Consider the following 351-residue polypeptide: MGITVRNLHKRFGEFAALDDVSLDFPAGELVALLGPSGCGKTTLLRVIAGLEHADSGQVVLQGLDVASVGARERQVGFVFQHYALFRHMTVFENVAFGLRVKPRRERPSEAAIRAKVHELLSLVQLDWLAQRYPSELSGGQRQRIALARALAVEPKVLLLDEPFGALDAKVRKELRGWLRRLHDDLHISTIFVTHDQEEALEVADRIVVLNHGRVEQVGSPQAVYDHPRSAFVYEFLGAANRLDGTVSGNGFVAHGAAQAIAVDADFAGPARAYVRPHDLELAAPYARAQGIAADVRRVVRLGGSVRVELAARSGEVLEAELDRNAWRALALDVGDALTAVPRAVRVFPAR.

Positions 3–237 (ITVRNLHKRF…PRSAFVYEFL (235 aa)) constitute an ABC transporter domain. 35 to 42 (GPSGCGKT) is an ATP binding site.

This sequence belongs to the ABC transporter superfamily. Sulfate/tungstate importer (TC 3.A.1.6) family. In terms of assembly, the complex is composed of two ATP-binding proteins (CysA), two transmembrane proteins (CysT and CysW) and a solute-binding protein (CysP).

The protein localises to the cell inner membrane. It catalyses the reaction sulfate(out) + ATP + H2O = sulfate(in) + ADP + phosphate + H(+). The catalysed reaction is thiosulfate(out) + ATP + H2O = thiosulfate(in) + ADP + phosphate + H(+). Functionally, part of the ABC transporter complex CysAWTP involved in sulfate/thiosulfate import. Responsible for energy coupling to the transport system. The sequence is that of Sulfate/thiosulfate import ATP-binding protein CysA from Burkholderia pseudomallei (strain K96243).